A 525-amino-acid polypeptide reads, in one-letter code: C6 finger transcription factor fsqA (525 aa).

A DNA-binding region (zn(2)-C6 fungal-type) is located at residues 12–53 (CDRCRGQKLRCVGAGKPIPNSSSRLLRNEIPCDRCRRAKVEC). 3 disordered regions span residues 80 to 142 (RSSS…LGDM), 204 to 260 (EWNS…EPAG), and 327 to 371 (RARS…ARSS). The span at 95–115 (PPNSLVTAASKPHPNSLSFNH) shows a compositional bias: polar residues. A compositionally biased stretch (polar residues) spans 327 to 337 (RARSQWSSLPE).

It localises to the nucleus. Its function is as follows. Transcription factor that regulates the expression of the gene cluster that mediates the biosynthesis of the isoquinoline alkaloids fumisoquin A, fumisoquin B and fumisoquin C; as well as small amounts of fumipyrrole as a shunt metabolite. The products of the cluster lead to a brown coloration and are important for growth and conidiation. The protein is C6 finger transcription factor fsqA of Aspergillus fumigatus (strain ATCC MYA-4609 / CBS 101355 / FGSC A1100 / Af293) (Neosartorya fumigata).